We begin with the raw amino-acid sequence, 250 residues long: MSKENKTTDFGFTQVPWEEKQKKVAGVFHSVAAKYDLMNDLMSFGIHRIWKKQTIAKSGVRKGDNVLDLAGGTGDLAYKFCQMVGQQGKVILSDINSSMLEVGKEKLTNKGCVGNIEYVQANAECLPFPDNYFDCITISFGLRNVTDKDKALASMCRVLKPGGRLLVLEFSKPIIPLLSKVYDEYSFKALPFLGKIITQDAESYKYLAESIRKHPDQQTLKQMMYDAGFDNVEYQNMTGGIVALHIGYKY.

S-adenosyl-L-methionine-binding positions include Thr73, Asp94, 122 to 123, and Ser139; that span reads NA.

It belongs to the class I-like SAM-binding methyltransferase superfamily. MenG/UbiE family.

The enzyme catalyses a 2-demethylmenaquinol + S-adenosyl-L-methionine = a menaquinol + S-adenosyl-L-homocysteine + H(+). It carries out the reaction a 2-methoxy-6-(all-trans-polyprenyl)benzene-1,4-diol + S-adenosyl-L-methionine = a 5-methoxy-2-methyl-3-(all-trans-polyprenyl)benzene-1,4-diol + S-adenosyl-L-homocysteine + H(+). It participates in quinol/quinone metabolism; menaquinone biosynthesis; menaquinol from 1,4-dihydroxy-2-naphthoate: step 2/2. The protein operates within cofactor biosynthesis; ubiquinone biosynthesis. Methyltransferase required for the conversion of demethylmenaquinol (DMKH2) to menaquinol (MKH2) and the conversion of 2-polyprenyl-6-methoxy-1,4-benzoquinol (DDMQH2) to 2-polyprenyl-3-methyl-6-methoxy-1,4-benzoquinol (DMQH2). The sequence is that of Ubiquinone/menaquinone biosynthesis C-methyltransferase UbiE from Francisella tularensis subsp. mediasiatica (strain FSC147).